Consider the following 139-residue polypeptide: Nucleoside diphosphate kinase (139 aa).

ATP contacts are provided by Lys-11, Phe-59, Arg-87, Thr-93, Arg-104, and Asn-114. The Pros-phosphohistidine intermediate role is filled by His-117.

It belongs to the NDK family. In terms of assembly, homotetramer. Mg(2+) is required as a cofactor.

It is found in the cytoplasm. It carries out the reaction a 2'-deoxyribonucleoside 5'-diphosphate + ATP = a 2'-deoxyribonucleoside 5'-triphosphate + ADP. It catalyses the reaction a ribonucleoside 5'-diphosphate + ATP = a ribonucleoside 5'-triphosphate + ADP. Its function is as follows. Major role in the synthesis of nucleoside triphosphates other than ATP. The ATP gamma phosphate is transferred to the NDP beta phosphate via a ping-pong mechanism, using a phosphorylated active-site intermediate. The protein is Nucleoside diphosphate kinase of Moorella thermoacetica (strain ATCC 39073 / JCM 9320).